The sequence spans 53 residues: Small ribosomal subunit protein uS14 (53 aa).

Residues cysteine 17, cysteine 20, cysteine 36, and cysteine 39 each contribute to the Zn(2+) site.

Belongs to the universal ribosomal protein uS14 family. Zinc-binding uS14 subfamily. As to quaternary structure, part of the 30S ribosomal subunit. Zn(2+) serves as cofactor.

Binds 16S rRNA, required for the assembly of 30S particles. The sequence is that of Small ribosomal subunit protein uS14 from Methanocaldococcus jannaschii (strain ATCC 43067 / DSM 2661 / JAL-1 / JCM 10045 / NBRC 100440) (Methanococcus jannaschii).